The sequence spans 295 residues: Ribosomal protein L11 methyltransferase (295 aa).

S-adenosyl-L-methionine-binding residues include Thr150, Gly171, Asp193, and Asn232.

This sequence belongs to the methyltransferase superfamily. PrmA family.

The protein localises to the cytoplasm. The catalysed reaction is L-lysyl-[protein] + 3 S-adenosyl-L-methionine = N(6),N(6),N(6)-trimethyl-L-lysyl-[protein] + 3 S-adenosyl-L-homocysteine + 3 H(+). Functionally, methylates ribosomal protein L11. The protein is Ribosomal protein L11 methyltransferase of Neisseria meningitidis serogroup A / serotype 4A (strain DSM 15465 / Z2491).